The following is a 147-amino-acid chain: Antiholin-like protein LrgA (147 aa).

The next 4 membrane-spanning stretches (helical) occupy residues 12 to 32, 35 to 55, 74 to 94, and 98 to 118; these read PAHFFHQVIVIALVLFVSKII, FMPIPMPASVIGLVLLFVLLC, NIGLLFVPAGISVVNSLGVIS, and FLIIGLIIVSTILLLICTGYV.

The protein belongs to the CidA/LrgA family. LrgA subfamily.

It localises to the cell membrane. Inhibits the expression or activity of extracellular murein hydrolases by interacting, possibly with LrgB, with the holin-like proteins CidA and/or CidB. The LrgAB and CidAB proteins may affect the proton motive force of the membrane. May be involved in programmed cell death (PCD), possibly triggering PCD in response to antibiotics and environmental stresses. The sequence is that of Antiholin-like protein LrgA from Staphylococcus aureus (strain USA300).